Here is a 219-residue protein sequence, read N- to C-terminus: Leukocyte surface antigen CD53 (219 aa).

Over 1 to 11 the chain is Cytoplasmic; it reads MGMSSLKLLKY. Residues 12-32 traverse the membrane as a helical segment; that stretch reads VLFIFNLLFWVCGCCILGFGI. The Extracellular portion of the chain corresponds to 33 to 54; that stretch reads YFLVQNTYGVLFRNLPFLTLGN. Residues 55–69 form a helical membrane-spanning segment; sequence ILVIVGSIIMVVAFL. Topologically, residues 70–80 are cytoplasmic; sequence GCMGSIKENKC. A helical transmembrane segment spans residues 81-106; sequence LLMSFFVLLLIILLAEVTIAILLFVY. The Extracellular portion of the chain corresponds to 107–181; it reads EQKLNTLVAE…NKAKSWFHSN (75 aa). N-linked (GlcNAc...) asparagine glycans are attached at residues asparagine 119, asparagine 129, and asparagine 148. Residues 182–206 form a helical membrane-spanning segment; the sequence is FLYIGIITICVCVIQVLGMSFALTL. The Cytoplasmic portion of the chain corresponds to 207–219; it reads NCQIDKTSQALGL.

It belongs to the tetraspanin (TM4SF) family. As to quaternary structure, interacts with SCIMP. Interacts with CD45/PTPRC. Interacts with IL7R. Interacts with RBL2 and PPP2CA.

The protein resides in the cell membrane. The protein localises to the cell junction. It localises to the membrane. Functionally, structural component of specialized membrane microdomains known as tetraspanin-enriched microdomains (TERMs), which act as platforms for receptor clustering and signaling. Participates thereby in diverse biological functions such as cell signal transduction, adhesion, migration and protein trafficking. Plays a role in the activation of monocytes and B-cells. Acts as an essential regulator of B-cell development by promoting interleukin-7 receptor/IL7R signaling. Also promotes, in B-cells, the BCR signaling by recruiting PKC to the plasma membrane in order to phosphorylate its substrates. Plays an essential role in lymphocyte homing to lymph nodes by stabilizing L-selectin/SELL cell surface expression. Also mediates metabolic and inflammatory functions in hepatocytes and adipose tissue by promoting TNF-alpha and LPS signaling independent of the immune compartment. Protects hematopoietic stem cell function in response to stress by facilitating DREAM complex activity through association with p130/RBL2 and its phosphatase PP2A. In Mus musculus (Mouse), this protein is Leukocyte surface antigen CD53 (Cd53).